Reading from the N-terminus, the 298-residue chain is Diphthine methyl ester synthase (298 aa).

Residues L9, D85, G88, 113 to 114 (SV), L164, L222, and H247 each bind S-adenosyl-L-methionine.

The protein belongs to the diphthine synthase family.

It is found in the cytoplasm. It carries out the reaction 2-[(3S)-amino-3-carboxypropyl]-L-histidyl-[translation elongation factor 2] + 4 S-adenosyl-L-methionine = diphthine methyl ester-[translation elongation factor 2] + 4 S-adenosyl-L-homocysteine + 3 H(+). The protein operates within protein modification; peptidyl-diphthamide biosynthesis. Its function is as follows. S-adenosyl-L-methionine-dependent methyltransferase that catalyzes four methylations of the modified target histidine residue in translation elongation factor 2 (EF-2), to form an intermediate called diphthine methyl ester. The four successive methylation reactions represent the second step of diphthamide biosynthesis. This chain is Diphthine methyl ester synthase (DPH5), found in Candida glabrata (strain ATCC 2001 / BCRC 20586 / JCM 3761 / NBRC 0622 / NRRL Y-65 / CBS 138) (Yeast).